Reading from the N-terminus, the 156-residue chain is Small ribosomal subunit protein uS7 (156 aa).

This sequence belongs to the universal ribosomal protein uS7 family. As to quaternary structure, part of the 30S ribosomal subunit. Contacts proteins S9 and S11.

One of the primary rRNA binding proteins, it binds directly to 16S rRNA where it nucleates assembly of the head domain of the 30S subunit. Is located at the subunit interface close to the decoding center, probably blocks exit of the E-site tRNA. The sequence is that of Small ribosomal subunit protein uS7 from Streptococcus pyogenes serotype M3 (strain ATCC BAA-595 / MGAS315).